A 331-amino-acid chain; its full sequence is uncharacterized protein (331 aa).

The protein belongs to the IIV-6 335L family.

This is an uncharacterized protein from Invertebrate iridescent virus 6 (IIV-6).